The chain runs to 262 residues: Cell division protein FtsQ (262 aa).

At 1–20 the chain is on the cytoplasmic side; sequence MSWSDKRRHWRARKSQVNWY. A helical membrane pass occupies residues 21–41; that stretch reads LWSGIGFLSLVIGSFVFGGYL. The Periplasmic segment spans residues 42 to 262; it reads LHKFLNDAST…EPIINDEKPR (221 aa). Residues 52 to 121 enclose the POTRA domain; sequence LPIEAVAIKG…AKLRVYLQEQ (70 aa).

This sequence belongs to the FtsQ/DivIB family. FtsQ subfamily. In terms of assembly, part of a complex composed of FtsB, FtsL and FtsQ.

It is found in the cell inner membrane. Functionally, essential cell division protein. May link together the upstream cell division proteins, which are predominantly cytoplasmic, with the downstream cell division proteins, which are predominantly periplasmic. May control correct divisome assembly. This chain is Cell division protein FtsQ, found in Shewanella oneidensis (strain ATCC 700550 / JCM 31522 / CIP 106686 / LMG 19005 / NCIMB 14063 / MR-1).